Reading from the N-terminus, the 955-residue chain is 2-oxoglutarate dehydrogenase E1 component (955 aa).

It belongs to the alpha-ketoglutarate dehydrogenase family. In terms of assembly, homodimer. Part of the 2-oxoglutarate dehydrogenase (OGDH) complex composed of E1 (2-oxoglutarate dehydrogenase), E2 (dihydrolipoamide succinyltransferase) and E3 (dihydrolipoamide dehydrogenase); the complex contains multiple copies of the three enzymatic components (E1, E2 and E3). It depends on thiamine diphosphate as a cofactor.

The catalysed reaction is N(6)-[(R)-lipoyl]-L-lysyl-[protein] + 2-oxoglutarate + H(+) = N(6)-[(R)-S(8)-succinyldihydrolipoyl]-L-lysyl-[protein] + CO2. E1 component of the 2-oxoglutarate dehydrogenase (OGDH) complex which catalyzes the decarboxylation of 2-oxoglutarate, the first step in the conversion of 2-oxoglutarate to succinyl-CoA and CO(2). This is 2-oxoglutarate dehydrogenase E1 component from Bacillus cereus (strain ZK / E33L).